A 97-amino-acid polypeptide reads, in one-letter code: ATP-dependent Clp protease adapter protein ClpS (97 aa).

Belongs to the ClpS family. Binds to the N-terminal domain of the chaperone ClpA.

Functionally, involved in the modulation of the specificity of the ClpAP-mediated ATP-dependent protein degradation. The sequence is that of ATP-dependent Clp protease adapter protein ClpS from Nautilia profundicola (strain ATCC BAA-1463 / DSM 18972 / AmH).